Consider the following 227-residue polypeptide: Protein FAM3C (227 aa).

The first 24 residues, 1 to 24 (MRVAGAAKLVVAVAVFLLTFYVIS), serve as a signal peptide directing secretion. Intrachain disulfides connect cysteine 58-cysteine 86 and cysteine 64-cysteine 221. One can recognise a GG-type lectin domain in the interval 67 to 225 (KHFAFKMASG…VEMEGCIPQK (159 aa)).

The protein belongs to the FAM3 family. As to expression, present in most secretory epithelia (at protein level).

The protein resides in the secreted. It localises to the cytoplasmic vesicle. May be involved in retinal laminar formation. Promotes epithelial to mesenchymal transition. The protein is Protein FAM3C (FAM3C) of Homo sapiens (Human).